Here is a 229-residue protein sequence, read N- to C-terminus: Cytochrome c oxidase subunit 2 (229 aa).

Over 1 to 14 the chain is Mitochondrial intermembrane; it reads MANPTHLGFQDAMS. The chain crosses the membrane as a helical span at residues 15–45; that stretch reads PLMEELLYFHDHTLMILFLISSLVFYMIFAL. At 46–59 the chain is on the mitochondrial matrix side; the sequence is LFPKLYYPNTSDVQ. A helical membrane pass occupies residues 60–87; the sequence is EVEVIWTVLPAIVLISIALPSLRTLYLM. At 88 to 229 the chain is on the mitochondrial intermembrane side; sequence DETNNPCLTI…QLWLEDSILS (142 aa). The Cu cation site is built by His-161, Cys-196, Glu-198, Cys-200, His-204, and Met-207. Glu-198 serves as a coordination point for Mg(2+).

This sequence belongs to the cytochrome c oxidase subunit 2 family. In terms of assembly, component of the cytochrome c oxidase (complex IV, CIV), a multisubunit enzyme composed of 14 subunits. The complex is composed of a catalytic core of 3 subunits MT-CO1, MT-CO2 and MT-CO3, encoded in the mitochondrial DNA, and 11 supernumerary subunits COX4I, COX5A, COX5B, COX6A, COX6B, COX6C, COX7A, COX7B, COX7C, COX8 and NDUFA4, which are encoded in the nuclear genome. The complex exists as a monomer or a dimer and forms supercomplexes (SCs) in the inner mitochondrial membrane with NADH-ubiquinone oxidoreductase (complex I, CI) and ubiquinol-cytochrome c oxidoreductase (cytochrome b-c1 complex, complex III, CIII), resulting in different assemblies (supercomplex SCI(1)III(2)IV(1) and megacomplex MCI(2)III(2)IV(2)). Found in a complex with TMEM177, COA6, COX18, COX20, SCO1 and SCO2. Interacts with TMEM177 in a COX20-dependent manner. Interacts with COX20. Interacts with COX16. Cu cation is required as a cofactor.

It localises to the mitochondrion inner membrane. The catalysed reaction is 4 Fe(II)-[cytochrome c] + O2 + 8 H(+)(in) = 4 Fe(III)-[cytochrome c] + 2 H2O + 4 H(+)(out). Its function is as follows. Component of the cytochrome c oxidase, the last enzyme in the mitochondrial electron transport chain which drives oxidative phosphorylation. The respiratory chain contains 3 multisubunit complexes succinate dehydrogenase (complex II, CII), ubiquinol-cytochrome c oxidoreductase (cytochrome b-c1 complex, complex III, CIII) and cytochrome c oxidase (complex IV, CIV), that cooperate to transfer electrons derived from NADH and succinate to molecular oxygen, creating an electrochemical gradient over the inner membrane that drives transmembrane transport and the ATP synthase. Cytochrome c oxidase is the component of the respiratory chain that catalyzes the reduction of oxygen to water. Electrons originating from reduced cytochrome c in the intermembrane space (IMS) are transferred via the dinuclear copper A center (CU(A)) of subunit 2 and heme A of subunit 1 to the active site in subunit 1, a binuclear center (BNC) formed by heme A3 and copper B (CU(B)). The BNC reduces molecular oxygen to 2 water molecules using 4 electrons from cytochrome c in the IMS and 4 protons from the mitochondrial matrix. This is Cytochrome c oxidase subunit 2 (MT-CO2) from Alligator mississippiensis (American alligator).